We begin with the raw amino-acid sequence, 365 residues long: Chorismate synthase (365 aa).

2 residues coordinate NADP(+): arginine 48 and arginine 54. FMN contacts are provided by residues 125–127 (RSS), 238–239 (NA), glycine 278, 293–297 (KPTSS), and arginine 319.

It belongs to the chorismate synthase family. As to quaternary structure, homotetramer. FMNH2 is required as a cofactor.

The catalysed reaction is 5-O-(1-carboxyvinyl)-3-phosphoshikimate = chorismate + phosphate. It participates in metabolic intermediate biosynthesis; chorismate biosynthesis; chorismate from D-erythrose 4-phosphate and phosphoenolpyruvate: step 7/7. In terms of biological role, catalyzes the anti-1,4-elimination of the C-3 phosphate and the C-6 proR hydrogen from 5-enolpyruvylshikimate-3-phosphate (EPSP) to yield chorismate, which is the branch point compound that serves as the starting substrate for the three terminal pathways of aromatic amino acid biosynthesis. This reaction introduces a second double bond into the aromatic ring system. In Janthinobacterium sp. (strain Marseille) (Minibacterium massiliensis), this protein is Chorismate synthase.